A 941-amino-acid polypeptide reads, in one-letter code: Lysine-specific demethylase 7A (941 aa).

The PHD-type zinc finger occupies 37-88; the sequence is PVYCVCRQPYDVNRFMIECDICKDWFHGSCVGVEEHHAVDIDLYHCPNCAVL. Residues 97-114 form a linker region; the sequence is RRNWHRHDYTEIDDGSKP. The JmjC domain maps to 230–386; that stretch reads FSDTKMSELV…MQLRCYEMEK (157 aa). Thr279 is a substrate binding site. The Fe cation site is built by His282 and Asp284. Position 299 (Lys299) interacts with substrate. Fe cation is bound at residue His354. Disordered regions lie at residues 597–633, 677–700, and 819–921; these read QSLY…EHEE, TTEE…KEES, and QDLS…MATA. Residue Ser604 is modified to Phosphoserine. Composition is skewed to basic and acidic residues over residues 618–633 and 685–700; these read MKIE…EHEE and GDEK…KEES. A compositionally biased stretch (polar residues) spans 834–876; sequence SEISQRVQSRNYVDSSGSSLQNGKYMQNSNLTSGACQISNGSL.

The protein belongs to the JHDM1 histone demethylase family. JHDM1D subfamily. Requires Fe(2+) as cofactor.

It localises to the nucleus. It catalyses the reaction N(6),N(6)-dimethyl-L-lysyl(9)-[histone H3] + 2 2-oxoglutarate + 2 O2 = L-lysyl(9)-[histone H3] + 2 formaldehyde + 2 succinate + 2 CO2. The catalysed reaction is N(6),N(6)-dimethyl-L-lysyl(27)-[histone H3] + 2 2-oxoglutarate + 2 O2 = L-lysyl(27)-[histone H3] + 2 formaldehyde + 2 succinate + 2 CO2. It carries out the reaction N(6),N(6)-dimethyl-L-lysyl(36)-[histone H3] + 2-oxoglutarate + O2 = N(6)-methyl-L-lysyl(36)-[histone H3] + formaldehyde + succinate + CO2. The enzyme catalyses N(6)-methyl-L-lysyl(20)-[histone H4] + 2-oxoglutarate + O2 = L-lysyl(20)-[histone H4] + formaldehyde + succinate + CO2. Functionally, histone demethylase required for brain development. Specifically demethylates dimethylated 'Lys-9', 'Lys-27' and 'Lys-36' (H3K9me2, H3K27me2, H3K36me2, respectively) of histone H3 and monomethylated histone H4 'Lys-20' residue (H4K20Me1), thereby playing a central role in histone code. Specifically binds trimethylated 'Lys-4' of histone H3 (H3K4me3), affecting histone demethylase specificity: in presence of H3K4me3, it has no demethylase activity toward H3K9me2, while it has high activity toward H3K27me2. Demethylates H3K9me2 in absence of H3K4me3. Has activity toward H4K20Me1 only when nucleosome is used as a substrate and when not histone octamer is used as substrate. The protein is Lysine-specific demethylase 7A (KDM7A) of Homo sapiens (Human).